A 1651-amino-acid polypeptide reads, in one-letter code: Alsin (1651 aa).

RCC1 repeat units follow at residues 59-108 (DGEV…AVTE), 109-167 (SGVV…ALSL), and 169-218 (REIW…ALVQ). Residues 425–462 (ETAAQSGSASTGPESLKDLREEQVKQESLQGKKSSSLM) form a disordered region. Over residues 427 to 437 (AAQSGSASTGP) the composition is skewed to polar residues. The span at 439–449 (SLKDLREEQVK) shows a compositional bias: basic and acidic residues. Residues 450–461 (QESLQGKKSSSL) show a composition bias toward polar residues. Residues Ser459, Ser460, Ser477, and Ser486 each carry the phosphoserine modification. The residue at position 504 (Thr504) is a Phosphothreonine. RCC1 repeat units lie at residues 519–570 (RTEV…ALTA) and 572–621 (SQVY…FLVD). Lys527 bears the N6-acetyllysine mark. In terms of domain architecture, DH spans 684 to 879 (GYIASLHELA…ESLALHLGKK (196 aa)). Positions 895–1001 (GKMTDSLRKP…RAISQAVDQA (107 aa)) constitute a PH domain. MORN repeat units follow at residues 1043 to 1065 (YDGR…DGKM), 1066 to 1088 (YSGM…NKAL), 1094 to 1116 (YVGH…SGEV), 1117 to 1139 (FEGC…KLTS), 1145 to 1167 (FIGQ…TRGE), 1169 to 1191 (YMGM…FGLY), 1192 to 1214 (YEGN…DDTI), and 1215 to 1238 (YEGE…HGDY). Residue Ser1329 is modified to Phosphoserine. Residues 1507–1651 (KQPDIALLGF…YFQIQREKLN (145 aa)) enclose the VPS9 domain.

Forms a heteromeric complex with ALS2CL. Interacts with ALS2CL.

Its function is as follows. May act as a GTPase regulator. Controls survival and growth of spinal motoneurons. In Mus musculus (Mouse), this protein is Alsin (Als2).